Here is a 108-residue protein sequence, read N- to C-terminus: MEDEEKAVEILGNTEAAHPPSPIRCCWLRLRCLAATSIICGCSCLGVMALVFAIKAEERHKAGRSEEAVRWGARARKLILASFAVWLAVLILGPLLLWLLSYAIAQAE.

Helical transmembrane passes span 34 to 54 and 78 to 98; these read AATSIICGCSCLGVMALVFAI and LILASFAVWLAVLILGPLLLW.

This sequence belongs to the CD225/Dispanin family.

It localises to the membrane. This Homo sapiens (Human) protein is Transmembrane protein 265.